Consider the following 519-residue polypeptide: Cytochrome P450 52A13 (519 aa).

Cys-466 contacts heme.

This sequence belongs to the cytochrome P450 family. Heme is required as a cofactor.

The protein resides in the membrane. In terms of biological role, together with an NADPH cytochrome P450 the enzyme system catalyzes the terminal hydroxylation as the first step in the assimilation of alkanes and fatty acids. The protein is Cytochrome P450 52A13 (CYP52A13) of Debaryomyces hansenii (Yeast).